Reading from the N-terminus, the 302-residue chain is HTH-type transcriptional regulator GbpR (302 aa).

The HTH lysR-type domain maps to 1-56; it reads MSHLRMLVMIEEHGQVSAAAAAMNMTQPAASRMLSEMEAIVKSPLCQRASRGVVLT. A DNA-binding region (H-T-H motif) is located at residues 16–35; sequence VSAAAAAMNMTQPAASRMLS.

Belongs to the LysR transcriptional regulatory family.

Activator of the expression of chvE when bound to its inducer and represses its expression in the absence of inducer (L-arabinose, D-fucose or D-galactose). Negatively regulates its own expression. This chain is HTH-type transcriptional regulator GbpR (gbpR), found in Rhizobium radiobacter (Agrobacterium tumefaciens).